Reading from the N-terminus, the 146-residue chain is Large ribosomal subunit protein uL11 (146 aa).

Belongs to the universal ribosomal protein uL11 family. Part of the ribosomal stalk of the 50S ribosomal subunit. Interacts with L10 and the large rRNA to form the base of the stalk. L10 forms an elongated spine to which L12 dimers bind in a sequential fashion forming a multimeric L10(L12)X complex. In terms of processing, one or more lysine residues are methylated.

Functionally, forms part of the ribosomal stalk which helps the ribosome interact with GTP-bound translation factors. The protein is Large ribosomal subunit protein uL11 of Treponema pallidum subsp. pallidum (strain SS14).